The primary structure comprises 539 residues: Alpha-copaene synthase (539 aa).

Positions 290 and 294 each coordinate Mg(2+). D290, D294, and R432 together coordinate substrate. The DDXXD motif motif lies at 290 to 294 (DDTFD).

It belongs to the terpene synthase family. Monomer. Mg(2+) is required as a cofactor. The cofactor is Mn(2+).

Its subcellular location is the cytoplasm. It carries out the reaction (2E,6E)-farnesyl diphosphate = alpha-copaene + diphosphate. It catalyses the reaction (2E,6E)-farnesyl diphosphate = (+)-germacrene D + diphosphate. The catalysed reaction is (2E,6E)-farnesyl diphosphate = (-)-(E)-beta-caryophyllene + diphosphate. The enzyme catalyses (2E,6E)-farnesyl diphosphate = delta-cadinene + diphosphate. The protein operates within secondary metabolite biosynthesis; terpenoid biosynthesis. In terms of biological role, converts farnesyl diphosphate to the bicyclic olefins alpha-copaene, (E)-beta-caryophyllene, and to the macrocyclic sesquiterpene germacrene D. Also mediates the biosynthesis of minor sesquiterpene hydrocarbons including delta-cadinene. Involved in indirect defense by producing volatile signals attracting natural enemies of herbivores. The sequence is that of Alpha-copaene synthase from Zea mays (Maize).